The chain runs to 273 residues: Formamidopyrimidine-DNA glycosylase (273 aa).

P2 acts as the Schiff-base intermediate with DNA in catalysis. E3 serves as the catalytic Proton donor. K57 functions as the Proton donor; for beta-elimination activity in the catalytic mechanism. The DNA site is built by H91, R110, and K151. The segment at 236–270 (QVYGRKDEACNDCGTIIEAKVIGQRNSYFCPHCQM) adopts an FPG-type zinc-finger fold. The active-site Proton donor; for delta-elimination activity is R260.

The protein belongs to the FPG family. As to quaternary structure, monomer. Zn(2+) is required as a cofactor.

It carries out the reaction Hydrolysis of DNA containing ring-opened 7-methylguanine residues, releasing 2,6-diamino-4-hydroxy-5-(N-methyl)formamidopyrimidine.. The catalysed reaction is 2'-deoxyribonucleotide-(2'-deoxyribose 5'-phosphate)-2'-deoxyribonucleotide-DNA = a 3'-end 2'-deoxyribonucleotide-(2,3-dehydro-2,3-deoxyribose 5'-phosphate)-DNA + a 5'-end 5'-phospho-2'-deoxyribonucleoside-DNA + H(+). Involved in base excision repair of DNA damaged by oxidation or by mutagenic agents. Acts as a DNA glycosylase that recognizes and removes damaged bases. Has a preference for oxidized purines, such as 7,8-dihydro-8-oxoguanine (8-oxoG). Has AP (apurinic/apyrimidinic) lyase activity and introduces nicks in the DNA strand. Cleaves the DNA backbone by beta-delta elimination to generate a single-strand break at the site of the removed base with both 3'- and 5'-phosphates. The chain is Formamidopyrimidine-DNA glycosylase from Actinobacillus pleuropneumoniae serotype 3 (strain JL03).